Reading from the N-terminus, the 652-residue chain is Acetolactate synthase 3, chloroplastic (652 aa).

The span at 1-20 (MAAATSSSPISLTAKPSSKS) shows a compositional bias: polar residues. The interval 1-23 (MAAATSSSPISLTAKPSSKSPLP) is disordered. The transit peptide at 1–69 (MAAATSSSPI…PEKTDKIKTF (69 aa)) directs the protein to the chloroplast. Residue Glu-126 coordinates thiamine diphosphate. Residues Arg-228, 334-355 (HGTV…FGVR), and 377-396 (DIDS…VCGD) each bind FAD. Residues 469-549 (QHQMWAAQFY…VKILLLNNQH (81 aa)) form a thiamine pyrophosphate binding region. Mg(2+) contacts are provided by Asp-520 and Asn-547.

The protein belongs to the TPP enzyme family. Mg(2+) is required as a cofactor. Thiamine diphosphate serves as cofactor.

Its subcellular location is the plastid. The protein resides in the chloroplast. The catalysed reaction is 2 pyruvate + H(+) = (2S)-2-acetolactate + CO2. It functions in the pathway amino-acid biosynthesis; L-isoleucine biosynthesis; L-isoleucine from 2-oxobutanoate: step 1/4. It participates in amino-acid biosynthesis; L-valine biosynthesis; L-valine from pyruvate: step 1/4. The polypeptide is Acetolactate synthase 3, chloroplastic (Brassica napus (Rape)).